The sequence spans 365 residues: Tartrate dehydrogenase/decarboxylase (365 aa).

Mn(2+) contacts are provided by Asp-225, Asp-250, and Asp-254.

It belongs to the isocitrate and isopropylmalate dehydrogenases family. Homodimer. The cofactor is Mg(2+). Mn(2+) serves as cofactor. It depends on K(+) as a cofactor.

It is found in the cytoplasm. The enzyme catalyses tartrate + NAD(+) = 2-hydroxy-3-oxosuccinate + NADH + H(+). The catalysed reaction is (2R,3S)-tartrate + NAD(+) = 2-hydroxy-3-oxosuccinate + NADH + H(+). It carries out the reaction (2R,3R)-tartrate + NAD(+) = 2-hydroxy-3-oxosuccinate + NADH + H(+). It catalyses the reaction (2R,3R)-tartrate + H(+) = (R)-glycerate + CO2. The enzyme catalyses (R)-malate + NAD(+) = pyruvate + CO2 + NADH. The protein operates within carbohydrate acid metabolism; tartrate degradation; 2-hydroxy-3-oxosuccinate from L-tartrate: step 1/1. It participates in carbohydrate acid metabolism; tartrate degradation; 2-hydroxy-3-oxosuccinate from meso-tartrate: step 1/1. Its pathway is carbohydrate acid metabolism; tartrate degradation; D-glycerate from L-tartrate: step 1/1. In terms of biological role, has multiple catalytic activities. Apart from catalyzing the oxidation of (+)-tartrate to oxaloglycolate, also converts meso-tartrate to D-glycerate and catalyzes the oxidative decarboxylation of D-malate to pyruvate. The polypeptide is Tartrate dehydrogenase/decarboxylase (Pseudomonas putida (Arthrobacter siderocapsulatus)).